The sequence spans 370 residues: Aminomethyltransferase (370 aa).

It belongs to the GcvT family. In terms of assembly, the glycine cleavage system is composed of four proteins: P, T, L and H.

It carries out the reaction N(6)-[(R)-S(8)-aminomethyldihydrolipoyl]-L-lysyl-[protein] + (6S)-5,6,7,8-tetrahydrofolate = N(6)-[(R)-dihydrolipoyl]-L-lysyl-[protein] + (6R)-5,10-methylene-5,6,7,8-tetrahydrofolate + NH4(+). Its function is as follows. The glycine cleavage system catalyzes the degradation of glycine. The sequence is that of Aminomethyltransferase from Corynebacterium aurimucosum (strain ATCC 700975 / DSM 44827 / CIP 107346 / CN-1) (Corynebacterium nigricans).